A 388-amino-acid chain; its full sequence is MLSSIKPSSSSFSTAISGSVRRSIPTKLKFSPLLIIKNCHNQSFNANVVSHQKPLHISSASNFKREVKVEAYEADRSRPLDINIELPDEQSAQKLKIGIYFATWWALNVVFNIYNKKVLNAFPYPWLTSTLSLACGSLMMLVSWATRIADAPKTDLEFWKTLFPVAVAHTIGHVAATVSMSKVAVSFTHIIKSGEPAFSVLVSRFFMGETFPLPVYLSLLPIIGGCALAAITELNFNITGFMGAMISNLAFVFRNIFSKKGMKGKSVSGMNYYACLSMMSLVILTPFSIAVEGPQMWAAGWQNAVSQVGPNFVWWVVAQSVFYHLYNQVSYMSLDQISPLTFSIGNTMKRISVIVASIIIFHTPIQPVNALGAAIAIFGTFLYSQAKQ.

The N-terminal 68 residues, 1-68 (MLSSIKPSSS…SASNFKREVK (68 aa)), are a transit peptide targeting the chloroplast. Helical transmembrane passes span 95-115 (LKIG…NIYN), 122-142 (FPYP…MMLV), 158-178 (FWKT…AATV), 211-231 (FPLP…LAAI), 233-253 (ELNF…AFVF), 281-301 (LVIL…AAGW), 305-325 (VSQV…FYHL), and 358-378 (IIIF…IAIF). One can recognise an EamA domain in the interval 113-231 (IYNKKVLNAF…IIGGCALAAI (119 aa)).

Belongs to the TPT transporter family. GPT (TC 2.A.7.9) subfamily. Expressed in seeds, flowers, stamens, and rosette leaves, with highest levels found in sepals and senescing leaves.

It localises to the plastid. The protein localises to the chloroplast membrane. Glucose 6-phosphate (Glc6P) transporter. Also transports inorganic phosphate, 3-phosphoglycerate, triose phosphates and, to a leser extent, phosphoenolpyruvate. Responsible for the transport of Glc6P into plastids of heterotrophic tissues where it can be used as a carbon source for starch biosynthesis, as substrate for fatty acid biosynthesis or as substrate for NADPH generation via the oxidative pentose phosphate pathway (OPPP). Required for dynamic acclimation of photosynthesis and partitioning of Glc6P between the chloroplast and the cytosol. May modulate the sensing of sugar status during early seedling development. The polypeptide is Glucose-6-phosphate/phosphate translocator 2, chloroplastic (Arabidopsis thaliana (Mouse-ear cress)).